Consider the following 212-residue polypeptide: Nucleoredoxin-like protein 1 (212 aa).

Residues 1-164 (MASLFSGRIL…AAEVLDRNFQ (164 aa)) form the Thioredoxin domain. The tract at residues 191-212 (AARGGRDPGGGGGEEGGAGGLF) is disordered. Residues 197–212 (DPGGGGGEEGGAGGLF) show a composition bias toward gly residues.

It belongs to the nucleoredoxin family. Interacts with isoform 1 of BSG.

The protein localises to the cell projection. It localises to the cilium. Its subcellular location is the photoreceptor outer segment. Its function is as follows. Plays an important role in retinal cone photoreceptor survival. In association with glucose transporter SLC16A1/GLUT1 and BSG, promotes retinal cone survival by enhancing aerobic glycolysis and accelerating the entry of glucose into photoreceptors. May play a role in cone cell viability, slowing down cone degeneration, does not seem to play a role in degenerating rods. This chain is Nucleoredoxin-like protein 1 (NXNL1), found in Homo sapiens (Human).